The chain runs to 197 residues: Rac-like GTP-binding protein RHO1 (197 aa).

13 to 20 (GDGAVGKT) serves as a coordination point for GTP. Residues 35–43 (YVPTVFDNF) carry the Effector region motif. GTP-binding positions include 60–64 (DTAGQ) and 118–121 (TKLD). Cys-194 is modified (cysteine methyl ester). A lipid anchor (S-geranylgeranyl cysteine) is attached at Cys-194. Positions 195-197 (SIL) are cleaved as a propeptide — removed in mature form.

This sequence belongs to the small GTPase superfamily. Rho family. In terms of tissue distribution, expressed at the tip of pollen tubes.

The protein resides in the cytoplasm. Its subcellular location is the membrane. Inactive GDP-bound Rho GTPases reside in the cytosol, are found in a complex with Rho GDP-dissociation inhibitors (Rho GDIs), and are released from the GDI protein in order to translocate to membranes upon activation. May be involved in cell polarity control during the actin-dependent tip growth of pollen tubes. In Pisum sativum (Garden pea), this protein is Rac-like GTP-binding protein RHO1 (RHO1).